The chain runs to 438 residues: UPF0597 protein YE0448 (438 aa).

This sequence belongs to the UPF0597 family.

The polypeptide is UPF0597 protein YE0448 (Yersinia enterocolitica serotype O:8 / biotype 1B (strain NCTC 13174 / 8081)).